We begin with the raw amino-acid sequence, 111 residues long: Probable monothiol glutaredoxin 2 (111 aa).

The region spanning 7-109 (LKFIQNAIKK…KMLKDETKLI (103 aa)) is the Glutaredoxin domain. Residue K24 participates in glutathione binding. Position 32 (C32) interacts with [2Fe-2S] cluster. Residues R61, F73, and 86 to 87 (CD) contribute to the glutathione site.

It belongs to the glutaredoxin family. Monothiol subfamily.

This chain is Probable monothiol glutaredoxin 2 (grxC2), found in Rickettsia typhi (strain ATCC VR-144 / Wilmington).